Here is a 166-residue protein sequence, read N- to C-terminus: NADH-quinone oxidoreductase subunit E (166 aa).

[2Fe-2S] cluster-binding residues include Cys-92, Cys-97, Cys-133, and Cys-137.

This sequence belongs to the complex I 24 kDa subunit family. Composed of 13 different subunits. Subunits NuoCD, E, F, and G constitute the peripheral sector of the complex. It depends on [2Fe-2S] cluster as a cofactor.

The catalysed reaction is a quinone + NADH + 5 H(+)(in) = a quinol + NAD(+) + 4 H(+)(out). In terms of biological role, NDH-1 shuttles electrons from NADH, via FMN and iron-sulfur (Fe-S) centers, to quinones in the respiratory chain. The immediate electron acceptor for the enzyme in this species is believed to be ubiquinone. Couples the redox reaction to proton translocation (for every two electrons transferred, four hydrogen ions are translocated across the cytoplasmic membrane), and thus conserves the redox energy in a proton gradient. The polypeptide is NADH-quinone oxidoreductase subunit E (nuoE) (Salmonella typhi).